We begin with the raw amino-acid sequence, 611 residues long: UPF0508 protein SCY_3114 (611 aa).

It belongs to the UPF0508 family.

This chain is UPF0508 protein SCY_3114, found in Saccharomyces cerevisiae (strain YJM789) (Baker's yeast).